The following is a 230-amino-acid chain: Ribonuclease 3 (230 aa).

One can recognise an RNase III domain in the interval 5–134 (NDTISKVINY…LIGAIYIDGG (130 aa)). E47 serves as a coordination point for Mg(2+). D51 is a catalytic residue. Residues N120 and E123 each contribute to the Mg(2+) site. Residue E123 is part of the active site. The region spanning 159–228 (DPKTSLQEWT…AELILEKIKK (70 aa)) is the DRBM domain.

It belongs to the ribonuclease III family. In terms of assembly, homodimer. Mg(2+) is required as a cofactor.

The protein localises to the cytoplasm. The catalysed reaction is Endonucleolytic cleavage to 5'-phosphomonoester.. Functionally, digests double-stranded RNA. Involved in the processing of primary rRNA transcript to yield the immediate precursors to the large and small rRNAs (23S and 16S). Processes some mRNAs, and tRNAs when they are encoded in the rRNA operon. Processes pre-crRNA and tracrRNA of type II CRISPR loci if present in the organism. In Wolbachia pipientis subsp. Culex pipiens (strain wPip), this protein is Ribonuclease 3.